The following is a 1942-amino-acid chain: Probable helicase with zinc finger domain (1942 aa).

The segment at 178–206 adopts a C3H1-type zinc-finger fold; that stretch reads SEEYTLCKRFLEQGICRYGAQCTSAHSQE. The residue at position 248 (Ser-248) is a Phosphoserine. An ATP-binding site is contributed by 668–675; that stretch reads GPYGTGKT. Residues 794 to 797 carry the DEAA box motif; sequence DEAA. Residues 1117 to 1127 are compositionally biased toward polar residues; it reads SGSTNKQQQSP. Residues 1117 to 1141 are disordered; that stretch reads SGSTNKQQQSPPKGKSLHHTQNDHF. Thr-1163 carries the phosphothreonine modification. The residue at position 1245 (Arg-1245) is an Omega-N-methylarginine. Disordered stretches follow at residues 1246 to 1345, 1386 to 1429, 1527 to 1552, and 1608 to 1637; these read GSPI…INLP, NLPE…GPNN, QGSAPYPHHHHPHLQHLPQPPLGLHQ, and RQVQSRSPPAVPSPPSSTDHSSHFSNFNDN. 2 stretches are compositionally biased toward basic and acidic residues: residues 1268-1281 and 1292-1308; these read HQEKDQHEQNRNGK and NKIRTPEKKPTEPKQVD. The span at 1399 to 1412 shows a compositional bias: low complexity; it reads NQVVQQQSQLNQQP. Ser-1614 is subject to Phosphoserine. The span at 1623–1636 shows a compositional bias: low complexity; the sequence is SSTDHSSHFSNFND. Ser-1645, Ser-1738, Ser-1741, and Ser-1766 each carry phosphoserine. Disordered stretches follow at residues 1729–1779, 1792–1843, and 1870–1942; these read FHPL…TPQD, NQSS…PEDQ, and MPNK…SYFK. A compositionally biased stretch (low complexity) spans 1731–1745; it reads PLSSRTVSSSSLPSL. 2 stretches are compositionally biased toward polar residues: residues 1761 to 1779 and 1792 to 1825; these read RISSSSVQPCSEEVSTPQD and NQSSFNFSSPESWVNTTSSTPYQNIPCNGSSRTA. Composition is skewed to low complexity over residues 1876–1888 and 1920–1942; these read AESANSSSPQSSA and LSLFQELSLGSSSGSNGFYSYFK.

The protein belongs to the DNA2/NAM7 helicase family. As to quaternary structure, interacts with SMYD2. Interacts with POLR2A. Interacts with SMYD3; the interaction may bridge SMYD3 and RNA polymerase II. In terms of tissue distribution, expressed predominantly in thymus and brain. Expression is down-regulated in 28 of 95 tested cancer cell lines.

It localises to the nucleus. Its function is as follows. May act as a helicase that plays a role in RNA metabolism in multiple tissues and organs within the developing embryo. This chain is Probable helicase with zinc finger domain (HELZ), found in Homo sapiens (Human).